A 265-amino-acid polypeptide reads, in one-letter code: Protein IL-40 (265 aa).

The N-terminal stretch at 1-20 is a signal peptide; it reads MGLPGLFCLAVLAASSFSKA. 2 N-linked (GlcNAc...) asparagine glycosylation sites follow: asparagine 86 and asparagine 132.

As to expression, expressed in fetal liver and bone marrow. Expressed in peripheral blood lymphocyte B cells.

The protein localises to the secreted. Probable B cell-associated cytokine that plays a role in the regulation of humoral immune responses. Involved in lymphocyte B cell development and immunoglobulin/IgA production. The polypeptide is Protein IL-40 (Homo sapiens (Human)).